Reading from the N-terminus, the 353-residue chain is DNA polymerase IV (353 aa).

Residues 6–187 enclose the UmuC domain; it reads IIHIDCDCFY…LPVTKLHGVG (182 aa). Mg(2+) is bound by residues aspartate 10 and aspartate 105. Glutamate 106 is a catalytic residue.

It belongs to the DNA polymerase type-Y family. In terms of assembly, monomer. Mg(2+) is required as a cofactor.

It localises to the cytoplasm. The catalysed reaction is DNA(n) + a 2'-deoxyribonucleoside 5'-triphosphate = DNA(n+1) + diphosphate. In terms of biological role, poorly processive, error-prone DNA polymerase involved in untargeted mutagenesis. Copies undamaged DNA at stalled replication forks, which arise in vivo from mismatched or misaligned primer ends. These misaligned primers can be extended by PolIV. Exhibits no 3'-5' exonuclease (proofreading) activity. May be involved in translesional synthesis, in conjunction with the beta clamp from PolIII. The chain is DNA polymerase IV from Pseudomonas savastanoi pv. phaseolicola (strain 1448A / Race 6) (Pseudomonas syringae pv. phaseolicola (strain 1448A / Race 6)).